The following is a 347-amino-acid chain: Protein RecA (347 aa).

68 to 75 lines the ATP pocket; the sequence is GPESSGKT.

The protein belongs to the RecA family.

It is found in the cytoplasm. Its function is as follows. Can catalyze the hydrolysis of ATP in the presence of single-stranded DNA, the ATP-dependent uptake of single-stranded DNA by duplex DNA, and the ATP-dependent hybridization of homologous single-stranded DNAs. It interacts with LexA causing its activation and leading to its autocatalytic cleavage. This chain is Protein RecA, found in Nocardia farcinica (strain IFM 10152).